The following is a 1930-amino-acid chain: Transport and Golgi organization protein 1 homolog (1930 aa).

The first 24 residues, 1-24, serve as a signal peptide directing secretion; it reads MAAAPGLLFWLFVLGALWWVPGQS. The Lumenal portion of the chain corresponds to 25–1171; the sequence is DLSHGRRFSD…EPAAVPPLES (1147 aa). In terms of domain architecture, SH3 spans 45-107; the sequence is MLMYRGKALE…PKDLIKVLHK (63 aa). Disordered regions lie at residues 144–263, 317–496, 547–737, 754–891, and 1018–1149; these read LELE…REKT, EEEE…AAEK, LGSS…MNSQ, TKQP…TPEI, and TAPL…PVGA. A compositionally biased stretch (basic and acidic residues) spans 152–189; sequence EESKKAEEVSQHREKSPEESRGRELDPVPEPEAFRADS. The segment covering 197-211 has biased composition (polar residues); it reads SESTEGLQGQPSAQE. A Phosphoserine modification is found at serine 229. Polar residues predominate over residues 247–256; that stretch reads ESRTGNSSPA. Positions 317–330 are enriched in acidic residues; it reads EEEEEVEEDADSSD. Residues 338-368 are compositionally biased toward basic and acidic residues; that stretch reads SDKDEKVPGKPMIEKYLTDKDPNLSEEDKVE. Residue asparagine 360 is glycosylated (N-linked (GlcNAc...) asparagine). Residues 420 to 430 show a composition bias toward acidic residues; the sequence is DSEDEGDDLFV. Composition is skewed to basic and acidic residues over residues 431–442 and 451–461; these read EEPKTNDVKDSE and GEEKDIQESRK. Asparagine 631 is a glycosylation site (N-linked (GlcNAc...) asparagine). Positions 661–677 are enriched in basic and acidic residues; it reads EDGTDAEQARAIRRPQE. Acidic residues predominate over residues 692–701; sequence DEEEEEEEGD. Over residues 715–726 the composition is skewed to polar residues; it reads VSAQQSRENSPS. Basic and acidic residues predominate over residues 791-800; the sequence is EESHLADMRA. Serine 856 bears the Phosphoserine mark. A compositionally biased stretch (basic and acidic residues) spans 1030–1039; sequence GWARPGEERQ. 2 stretches are compositionally biased toward polar residues: residues 1040 to 1054 and 1115 to 1127; these read PPQQ…TGDL and QPVT…SEVS. A compositionally biased stretch (basic and acidic residues) spans 1128–1137; sequence QKPDTKKDID. The stretch at 1172-1192 is an intramembrane region; the sequence is AFGSLYAFILYLSKMLLATLP. Residues 1193–1202 are Lumenal-facing; sequence DNVQPGPDFY. A helical transmembrane segment spans residues 1203–1223; it reads GLPWQPVIITAVLGIVSFAIF. The Cytoplasmic segment spans residues 1224 to 1930; the sequence is SWRTILVVKS…DRSQASKPTP (707 aa). Coiled coils occupy residues 1236–1329 and 1359–1422; these read YQVT…KNQD and LNEA…EIAL. Residues 1238–1677 form a mediates interaction with MIA2 region; sequence VTEKQISEKL…VIVKPMPGRP (440 aa). Residues 1447-1472 are disordered; it reads ESEDPDKGGNESDDLANGETGGDRSE. Residue serine 1458 is modified to Phosphoserine. A coiled-coil region spans residues 1514–1662; it reads NLEDQIKKLE…LLEMTQKMAM (149 aa). Disordered regions lie at residues 1669-1796, 1801-1820, and 1840-1930; these read IVKP…VPLM, PPPI…FGPR, and APGV…KPTP. Polar residues predominate over residues 1677 to 1694; it reads PNTQNPPRRGLLSQNGSF. Phosphoserine occurs at positions 1693 and 1705. Positions 1706–1715 are enriched in pro residues; sequence PPLPAEPPGR. Residues 1722–1738 are compositionally biased toward basic and acidic residues; sequence SRRDTPRSEFGSLDRHL. Residues serine 1733, serine 1754, serine 1766, and serine 1770 each carry the phosphoserine modification. A compositionally biased stretch (low complexity) spans 1760 to 1773; sequence PVVNSSSRSSSPAK. A proline-rich domain (PRD); mediates interaction with the COPII coat subunits SEC23A and SEC23B region spans residues 1776-1930; the sequence is DEGKVNMAPK…DRSQASKPTP (155 aa). Positions 1801-1811 are enriched in pro residues; sequence PPPIRYGPPPQ. At arginine 1805 the chain carries Asymmetric dimethylarginine. Residues 1809–1869 are SEC16A-interacting region (SIR); required for its localization to endoplasmic reticulum exit sites and for its interaction with SEC16A; the sequence is PPQLCGGPFG…GHTPFRPPGS (61 aa). Positions 1846–1858 are enriched in basic and acidic residues; the sequence is GKRDLPLDPREFL. The segment covering 1881–1898 has biased composition (pro residues); it reads RLPPPTHGPQEYPPPPPA. Serine 1915 carries the phosphoserine modification. Residues 1915–1930 are compositionally biased toward polar residues; the sequence is SPSSVQDRSQASKPTP.

Belongs to the MIA/OTOR family. Tango1 subfamily. Interacts with MIA2. Interacts (via SH3 domain) with COL7A1. Interacts with the COPII coat subunits SEC23A, SEC23B and maybe SEC24C. May interact with APOB and MIA2. Interacts with SEC16A.

It is found in the endoplasmic reticulum membrane. In terms of biological role, plays a role in the transport of cargos that are too large to fit into COPII-coated vesicles and require specific mechanisms to be incorporated into membrane-bound carriers and exported from the endoplasmic reticulum. This protein is required for collagen VII (COL7A1) secretion by loading COL7A1 into transport carriers. It may participate in cargo loading of COL7A1 at endoplasmic reticulum exit sites by binding to COPII coat subunits Sec23/24 and guiding SH3-bound COL7A1 into a growing carrier. Does not play a role in global protein secretion and is apparently specific to COL7A1 cargo loading. However, it may participate in secretion of other proteins in cells that do not secrete COL7A1. It is also specifically required for the secretion of lipoproteins by participating in their export from the endoplasmic reticulum. Required for correct assembly of COPII coat components at endoplasmic reticulum exit sites (ERES) and for the localization of SEC16A and membrane-bound ER-resident complexes consisting of MIA2 and PREB/SEC12 to ERES. In Mus musculus (Mouse), this protein is Transport and Golgi organization protein 1 homolog.